The chain runs to 661 residues: Acetyl-coenzyme A synthetase (661 aa).

Residues Arg197–Lys200 and Thr320 contribute to the CoA site. ATP is bound by residues Gly396 to Pro398, Asp420 to Thr425, Asp511, and Arg526. Position 534 (Ser534) interacts with CoA. Arg537 provides a ligand contact to ATP. Residues Val548 and Val553 each contribute to the Mg(2+) site. N6-acetyllysine is present on Lys620.

This sequence belongs to the ATP-dependent AMP-binding enzyme family. It depends on Mg(2+) as a cofactor. Post-translationally, acetylated. Deacetylation by the SIR2-homolog deacetylase activates the enzyme.

It catalyses the reaction acetate + ATP + CoA = acetyl-CoA + AMP + diphosphate. Catalyzes the conversion of acetate into acetyl-CoA (AcCoA), an essential intermediate at the junction of anabolic and catabolic pathways. AcsA undergoes a two-step reaction. In the first half reaction, AcsA combines acetate with ATP to form acetyl-adenylate (AcAMP) intermediate. In the second half reaction, it can then transfer the acetyl group from AcAMP to the sulfhydryl group of CoA, forming the product AcCoA. This is Acetyl-coenzyme A synthetase from Leptospira interrogans serogroup Icterohaemorrhagiae serovar copenhageni (strain Fiocruz L1-130).